A 235-amino-acid polypeptide reads, in one-letter code: 7-cyano-7-deazaguanine synthase (235 aa).

16-26 contacts ATP; it reads FSGGQDSTTCL. Positions 193, 201, 204, and 207 each coordinate Zn(2+).

The protein belongs to the QueC family. Zn(2+) is required as a cofactor.

The catalysed reaction is 7-carboxy-7-deazaguanine + NH4(+) + ATP = 7-cyano-7-deazaguanine + ADP + phosphate + H2O + H(+). It participates in purine metabolism; 7-cyano-7-deazaguanine biosynthesis. Its function is as follows. Catalyzes the ATP-dependent conversion of 7-carboxy-7-deazaguanine (CDG) to 7-cyano-7-deazaguanine (preQ(0)). The sequence is that of 7-cyano-7-deazaguanine synthase from Actinobacillus succinogenes (strain ATCC 55618 / DSM 22257 / CCUG 43843 / 130Z).